We begin with the raw amino-acid sequence, 428 residues long: ATP-dependent RNA helicase RhlB (428 aa).

A Q motif motif is present at residues 9–37 (QKFSDFALHPLVVEALENKGFQYCTPIQA). Residues 40–219 (LPLTLSGRDV…FEQMNNAEYV (180 aa)) enclose the Helicase ATP-binding domain. Position 53–60 (53–60 (AQTGTGKT)) interacts with ATP. Positions 165-168 (DEAD) match the DEAD box motif. The Helicase C-terminal domain maps to 245–390 (RLLQTLIEEE…VSKYNSDALL (146 aa)). The tract at residues 394 to 428 (PAPKRLARTRTGNGPRRNSAPRRSGAPRNNRKRPG) is disordered.

Belongs to the DEAD box helicase family. RhlB subfamily. As to quaternary structure, component of the RNA degradosome, which is a multiprotein complex involved in RNA processing and mRNA degradation.

It localises to the cytoplasm. The catalysed reaction is ATP + H2O = ADP + phosphate + H(+). Its function is as follows. DEAD-box RNA helicase involved in RNA degradation. Has RNA-dependent ATPase activity and unwinds double-stranded RNA. In Yersinia pseudotuberculosis serotype O:1b (strain IP 31758), this protein is ATP-dependent RNA helicase RhlB.